Consider the following 157-residue polypeptide: Peptide methionine sulfoxide reductase MsrA (157 aa).

Cys-10 is an active-site residue.

Belongs to the MsrA Met sulfoxide reductase family.

The enzyme catalyses L-methionyl-[protein] + [thioredoxin]-disulfide + H2O = L-methionyl-(S)-S-oxide-[protein] + [thioredoxin]-dithiol. It carries out the reaction [thioredoxin]-disulfide + L-methionine + H2O = L-methionine (S)-S-oxide + [thioredoxin]-dithiol. In terms of biological role, has an important function as a repair enzyme for proteins that have been inactivated by oxidation. Catalyzes the reversible oxidation-reduction of methionine sulfoxide in proteins to methionine. The chain is Peptide methionine sulfoxide reductase MsrA from Clostridium perfringens (strain ATCC 13124 / DSM 756 / JCM 1290 / NCIMB 6125 / NCTC 8237 / Type A).